We begin with the raw amino-acid sequence, 243 residues long: Killer cell lectin-like receptor subfamily I member 1 (243 aa).

Topologically, residues 1 to 80 (MPHSKHRDYT…RQGPKSAVWR (80 aa)) are cytoplasmic. 2 short sequence motifs (ITIM motif) span residues 16–21 (IPYTEL) and 47–52 (LKYAEL). Residues 81-101 (VVTCVLGVLCVVLMITMGILV) traverse the membrane as a helical; Signal-anchor for type II membrane protein segment. Over 102–243 (PKLFSGQEEQ…KPYACEFNKM (142 aa)) the chain is Extracellular. 5 N-linked (GlcNAc...) asparagine glycosylation sites follow: N123, N191, N194, N200, and N214. The C-type lectin domain maps to 137-239 (FGNNFYLFFR…CSSKKPYACE (103 aa)). 2 disulfide bridges follow: C158–C238 and C217–C230.

As to quaternary structure, heterodimer with KLRE1. Interacts with PTPN6. Expressed in natural killer (NK) cells.

The protein resides in the cell membrane. In terms of biological role, lectin-like receptor for natural killer (NK) cells. Heterodimer formation with KLRE1 mediates inhibition of NK cell cytolytic activity. The sequence is that of Killer cell lectin-like receptor subfamily I member 1 from Rattus norvegicus (Rat).